The sequence spans 95 residues: Small ribosomal subunit protein bS6 (95 aa).

It belongs to the bacterial ribosomal protein bS6 family.

Binds together with bS18 to 16S ribosomal RNA. In Exiguobacterium sibiricum (strain DSM 17290 / CCUG 55495 / CIP 109462 / JCM 13490 / 255-15), this protein is Small ribosomal subunit protein bS6.